We begin with the raw amino-acid sequence, 186 residues long: MNKDMWKLSPKNIAALGIGSAVFVIVGRFASIPSGLPNTNFELVYAFLAMIAMIYGPTVGFGVGFIGHVLLDLMMYGQTWWNWNFAAGFLGFFIGLYALRVNIDQGEFSAKEMVIFNVVQVVANAIVWFLLGSVGDMVLNSEPAAKVFAQAGLTTLMDGLTIAVLGTILLKLYAGSRVKKGSLHKD.

5 helical membrane passes run 13–33, 46–66, 79–99, 114–134, and 150–170; these read IAAL…ASIP, AFLA…VGFI, TWWN…LYAL, VIFN…LGSV, and QAGL…TILL.

It belongs to the UPF0397 family.

The protein localises to the cell membrane. This is UPF0397 protein LBUL_1584 from Lactobacillus delbrueckii subsp. bulgaricus (strain ATCC BAA-365 / Lb-18).